Reading from the N-terminus, the 851-residue chain is DNA mismatch repair protein MutS (851 aa).

614–621 (GPNMGGKS) contributes to the ATP binding site.

It belongs to the DNA mismatch repair MutS family.

Functionally, this protein is involved in the repair of mismatches in DNA. It is possible that it carries out the mismatch recognition step. This protein has a weak ATPase activity. This is DNA mismatch repair protein MutS from Yersinia pestis.